Consider the following 426-residue polypeptide: Serine hydroxymethyltransferase (426 aa).

(6S)-5,6,7,8-tetrahydrofolate contacts are provided by residues Leu113 and 117 to 119 (GHL). Lys222 is modified (N6-(pyridoxal phosphate)lysine). 363–365 (SAF) contributes to the (6S)-5,6,7,8-tetrahydrofolate binding site.

This sequence belongs to the SHMT family. In terms of assembly, homodimer. The cofactor is pyridoxal 5'-phosphate.

The protein resides in the cytoplasm. It catalyses the reaction (6R)-5,10-methylene-5,6,7,8-tetrahydrofolate + glycine + H2O = (6S)-5,6,7,8-tetrahydrofolate + L-serine. Its pathway is one-carbon metabolism; tetrahydrofolate interconversion. It participates in amino-acid biosynthesis; glycine biosynthesis; glycine from L-serine: step 1/1. Catalyzes the reversible interconversion of serine and glycine with tetrahydrofolate (THF) serving as the one-carbon carrier. This reaction serves as the major source of one-carbon groups required for the biosynthesis of purines, thymidylate, methionine, and other important biomolecules. Also exhibits THF-independent aldolase activity toward beta-hydroxyamino acids, producing glycine and aldehydes, via a retro-aldol mechanism. This is Serine hydroxymethyltransferase from Bacteroides thetaiotaomicron (strain ATCC 29148 / DSM 2079 / JCM 5827 / CCUG 10774 / NCTC 10582 / VPI-5482 / E50).